The following is a 169-amino-acid chain: Myosin regulatory light chain 11 (169 aa).

Ala2 carries the n,N,N-trimethylalanine modification. Phosphoserine is present on residues Ser15 and Ser16. A phosphothreonine mark is found at Thr25 and Thr35. Residues Thr25–Leu60 form the EF-hand 1 domain. Ca(2+)-binding residues include Asp38, Asn40, Asp42, and Asp49. Ser75 carries the phosphoserine modification. 2 consecutive EF-hand domains span residues Asp95 to Arg130 and Phe131 to Lys166. Residue Thr101 is modified to Phosphothreonine.

Myosin is a hexamer of 2 heavy chains and 4 light chains.

Its function is as follows. Myosin regulatory subunit that plays an essential role to maintain muscle integrity during early development. Plays a role in regulation of muscle contraction. The protein is Myosin regulatory light chain 11 (Myl11) of Mus musculus (Mouse).